The sequence spans 336 residues: Phospho-N-acetylmuramoyl-pentapeptide-transferase (336 aa).

Transmembrane regions (helical) follow at residues 1 to 21, 56 to 76, 78 to 98, 124 to 144, 148 to 168, 184 to 204, 210 to 230, 239 to 259, 264 to 284, and 314 to 334; these read MLPL…SLFL, IPTA…LLLF, IQLW…ALGW, CLAA…FLSF, FLGI…FAIA, GLDG…LVVA, PWAF…LGFL, VFMG…CAVL, FLLL…IVQV, and VVRN…IAVF.

This sequence belongs to the glycosyltransferase 4 family. MraY subfamily. Mg(2+) is required as a cofactor.

The protein localises to the cell inner membrane. It catalyses the reaction UDP-N-acetyl-alpha-D-muramoyl-L-alanyl-gamma-D-glutamyl-meso-2,6-diaminopimeloyl-D-alanyl-D-alanine + di-trans,octa-cis-undecaprenyl phosphate = di-trans,octa-cis-undecaprenyl diphospho-N-acetyl-alpha-D-muramoyl-L-alanyl-D-glutamyl-meso-2,6-diaminopimeloyl-D-alanyl-D-alanine + UMP. Its pathway is cell wall biogenesis; peptidoglycan biosynthesis. Its function is as follows. Catalyzes the initial step of the lipid cycle reactions in the biosynthesis of the cell wall peptidoglycan: transfers peptidoglycan precursor phospho-MurNAc-pentapeptide from UDP-MurNAc-pentapeptide onto the lipid carrier undecaprenyl phosphate, yielding undecaprenyl-pyrophosphoryl-MurNAc-pentapeptide, known as lipid I. The protein is Phospho-N-acetylmuramoyl-pentapeptide-transferase of Chlamydia trachomatis serovar L2b (strain UCH-1/proctitis).